Consider the following 849-residue polypeptide: uncharacterized protein (849 aa).

2 helical membrane-spanning segments follow: residues 587–607 (VALG…LGLF) and 620–640 (AGIL…TGDW).

The protein resides in the cell membrane. This is an uncharacterized protein from Methanocaldococcus jannaschii (strain ATCC 43067 / DSM 2661 / JAL-1 / JCM 10045 / NBRC 100440) (Methanococcus jannaschii).